Consider the following 383-residue polypeptide: WAT1-related protein At3g18200 (383 aa).

The segment covering 1–16 (MCYQTSKKKRRSRKRR) has biased composition (basic residues). A disordered region spans residues 1 to 23 (MCYQTSKKKRRSRKRRAQEEKEK). A run of 10 helical transmembrane segments spans residues 33–53 (VKLV…HIVS), 65–85 (VYPV…AYFF), 91–111 (PPLT…GITA), 126–146 (TFAS…ACAL), 158–178 (GVAK…ITLY), 204–224 (LTLG…WMVL), 237–257 (TLTS…ALFV), 272–292 (LFTI…LQTW), 300–320 (VFVA…AFLI), and 325–345 (LYSG…LVLW). EamA domains are found at residues 44–173 (FCFA…GGAT) and 216–344 (LSWA…YLVL).

It belongs to the drug/metabolite transporter (DMT) superfamily. Plant drug/metabolite exporter (P-DME) (TC 2.A.7.4) family.

Its subcellular location is the membrane. This is WAT1-related protein At3g18200 from Arabidopsis thaliana (Mouse-ear cress).